Consider the following 502-residue polypeptide: ATP synthase subunit alpha (502 aa).

Residue 170 to 177 participates in ATP binding; that stretch reads GDRKTGKT.

Belongs to the ATPase alpha/beta chains family. F-type ATPases have 2 components, CF(1) - the catalytic core - and CF(0) - the membrane proton channel. CF(1) has five subunits: alpha(3), beta(3), gamma(1), delta(1), epsilon(1). CF(0) has four main subunits: a, b, b' and c.

It localises to the cellular thylakoid membrane. It catalyses the reaction ATP + H2O + 4 H(+)(in) = ADP + phosphate + 5 H(+)(out). Its function is as follows. Produces ATP from ADP in the presence of a proton gradient across the membrane. The alpha chain is a regulatory subunit. The protein is ATP synthase subunit alpha of Microcystis aeruginosa (strain NIES-843 / IAM M-2473).